A 515-amino-acid chain; its full sequence is 2,3-bisphosphoglycerate-independent phosphoglycerate mutase (515 aa).

The Mn(2+) site is built by D14 and S63. S63 is an active-site residue. Residues H124, 154–155, R186, R192, 259–262, and K334 contribute to the substrate site; these read RD and RADR. Positions 401, 405, 442, 443, and 460 each coordinate Mn(2+).

The protein belongs to the BPG-independent phosphoglycerate mutase family. It depends on Mg(2+) as a cofactor. The cofactor is Mn(2+).

It carries out the reaction (2R)-2-phosphoglycerate = (2R)-3-phosphoglycerate. It functions in the pathway carbohydrate degradation; glycolysis; pyruvate from D-glyceraldehyde 3-phosphate: step 3/5. Activity is not affected by 2,3-bisphosphoglycerate. Functionally, catalyzes the interconversion of 2-phosphoglycerate and 3-phosphoglycerate. In Onchocerca volvulus, this protein is 2,3-bisphosphoglycerate-independent phosphoglycerate mutase.